The primary structure comprises 295 residues: Protoheme IX farnesyltransferase 2 (295 aa).

Helical transmembrane passes span 9 to 29 (ITKPGIIFGNVLSVAGGFFLA), 36 to 56 (FALFLAVVIGTSLVVASGCVF), 83 to 103 (LPLALIYATLLGVAGFSLLYV), 108 to 128 (LSAFCALIGFIVYVGFYSLWL), 135 to 155 (GTLVGSLSGAMPPVIGYCAVS), 163 to 183 (VTLLVMFSLWQMPHSFAIAIF), 209 to 229 (IVLYVLAFVLATLMLTLGGYA), 230 to 250 (GLGYLAVAAAMGLYWLYMAWG), and 264 to 284 (VFGFSILTVTALSVMMGVDSQ).

The protein belongs to the UbiA prenyltransferase family. Protoheme IX farnesyltransferase subfamily.

It is found in the cell inner membrane. It catalyses the reaction heme b + (2E,6E)-farnesyl diphosphate + H2O = Fe(II)-heme o + diphosphate. It functions in the pathway porphyrin-containing compound metabolism; heme O biosynthesis; heme O from protoheme: step 1/1. In terms of biological role, converts heme B (protoheme IX) to heme O by substitution of the vinyl group on carbon 2 of heme B porphyrin ring with a hydroxyethyl farnesyl side group. The polypeptide is Protoheme IX farnesyltransferase 2 (Pseudomonas putida (strain GB-1)).